The chain runs to 440 residues: Transposon Ty1-LR4 Gag polyprotein (440 aa).

Polar residues-rich tracts occupy residues 1–10 (MESQQLSQHP), 48–60 (TKAN…TPAS), and 127–152 (QSQF…GNTF). 3 disordered regions span residues 1 to 93 (MESQ…MMTQ), 126 to 173 (PQSQ…RPPP), and 352 to 440 (GSRN…PGTY). A compositionally biased stretch (low complexity) spans 153–165 (TDSSSADSDMTST). The tract at residues 299–401 (NNGIHINNKV…NSKSKTARAH (103 aa)) is RNA-binding. The segment covering 402–418 (NVSTSNNSPSTDNDSIS) has biased composition (low complexity). A Phosphoserine modification is found at Ser416. Residues 419 to 428 (KSTTEPIQLN) show a composition bias toward polar residues. The span at 429-440 (NKHDLHLRPGTY) shows a compositional bias: basic and acidic residues.

In terms of assembly, homotrimer.

It localises to the cytoplasm. Capsid protein (CA) is the structural component of the virus-like particle (VLP), forming the shell that encapsulates the retrotransposons dimeric RNA genome. The particles are assembled from trimer-clustered units and there are holes in the capsid shells that allow for the diffusion of macromolecules. CA also has nucleocapsid-like chaperone activity, promoting primer tRNA(i)-Met annealing to the multipartite primer-binding site (PBS), dimerization of Ty1 RNA and initiation of reverse transcription. The sequence is that of Transposon Ty1-LR4 Gag polyprotein (TY1A-LR4) from Saccharomyces cerevisiae (strain ATCC 204508 / S288c) (Baker's yeast).